Reading from the N-terminus, the 947-residue chain is Receptor-like protein 56 (947 aa).

The first 27 residues, 1–27, serve as a signal peptide directing secretion; the sequence is MEGKVFSGQKLILVMLLLGHLHGFSSC. The Extracellular portion of the chain corresponds to 28–899; the sequence is IEKERKALLE…EDDKEVAIDM (872 aa). N-linked (GlcNAc...) asparagine glycosylation is found at N60, N75, and N98. LRR repeat units lie at residues 105–128, 134–157, 159–182, 183–207, 209–232, 233–257, 259–281, 282–305, and 307–330; these read FEEV…VEGY, LRNL…FLNA, TSLT…ELKN, LTNL…EFPY, KKLK…GLKN, LTNL…VFCE, KNLQ…CFGN, LNKL…SFSS, and ESLE…PLTN. N-linked (GlcNAc...) asparagine glycans are attached at residues N141, N148, and N182. A glycan (N-linked (GlcNAc...) asparagine) is linked at N232. An N-linked (GlcNAc...) asparagine glycan is attached at N330. The stretch at 332–356 is one LRR 10; degenerate repeat; it reads TKLKVFIFSSKDDMVQVKIESTWQP. LRR repeat units lie at residues 357–380, 381–404, 405–427, 428–450, 452–476, 477–500, 502–527, 529–549, 550–575, 577–598, 600–616, 617–640, 642–663, 664–686, 757–780, 781–804, 805–829, and 831–854; these read LFQL…LMYQ, KNLH…LLEN, NPEL…PTSV, HNLQ…NFGR, LPNL…MGEM, YNIS…FVSS, FSLS…NFTS, IVLR…LLTL, VDLC…VFEY, NFLD…SLDN, LFLH…DTFL, GSIQ…VDTQ, ISFL…LCEF, SKMR…CFNN, LNSM…ELGD, LFKL…SFSK, LQDI…LTNL, and SLAI…QFNT. N415 carries an N-linked (GlcNAc...) asparagine glycan. N-linked (GlcNAc...) asparagine glycans are attached at residues N459, N478, N488, and N524. N-linked (GlcNAc...) asparagine glycosylation is present at N606. Residue N686 is glycosylated (N-linked (GlcNAc...) asparagine). N-linked (GlcNAc...) asparagine glycosylation is found at N788, N828, N836, and N841. A helical transmembrane segment spans residues 900 to 920; sequence LVFYWSTAGTYVTALIGILVL. At 921 to 947 the chain is on the cytoplasmic side; the sequence is MCVDCSWRRAWLRLVDAFIASAKSKLA.

This sequence belongs to the RLP family.

It is found in the cell membrane. The polypeptide is Receptor-like protein 56 (Arabidopsis thaliana (Mouse-ear cress)).